The chain runs to 728 residues: 1,4-alpha-glucan branching enzyme GlgB (728 aa).

Catalysis depends on aspartate 405, which acts as the Nucleophile. Glutamate 458 (proton donor) is an active-site residue.

The protein belongs to the glycosyl hydrolase 13 family. GlgB subfamily. Monomer.

It catalyses the reaction Transfers a segment of a (1-&gt;4)-alpha-D-glucan chain to a primary hydroxy group in a similar glucan chain.. Its pathway is glycan biosynthesis; glycogen biosynthesis. Its function is as follows. Catalyzes the formation of the alpha-1,6-glucosidic linkages in glycogen by scission of a 1,4-alpha-linked oligosaccharide from growing alpha-1,4-glucan chains and the subsequent attachment of the oligosaccharide to the alpha-1,6 position. This is 1,4-alpha-glucan branching enzyme GlgB from Escherichia coli O157:H7.